We begin with the raw amino-acid sequence, 208 residues long: Urease accessory protein UreE (208 aa).

A disordered region spans residues Ala-145–His-195.

Belongs to the UreE family.

Its subcellular location is the cytoplasm. Functionally, involved in urease metallocenter assembly. Binds nickel. Probably functions as a nickel donor during metallocenter assembly. The protein is Urease accessory protein UreE of Azorhizobium caulinodans (strain ATCC 43989 / DSM 5975 / JCM 20966 / LMG 6465 / NBRC 14845 / NCIMB 13405 / ORS 571).